A 123-amino-acid polypeptide reads, in one-letter code: Small ribosomal subunit protein uS12 (123 aa).

The disordered stretch occupies residues 9–28 (RNGRKRATKKTTTPALKGAP). Over residues 18–27 (KTTTPALKGA) the composition is skewed to low complexity. 3-methylthioaspartic acid is present on Asp-89.

This sequence belongs to the universal ribosomal protein uS12 family. As to quaternary structure, part of the 30S ribosomal subunit. Contacts proteins S8 and S17. May interact with IF1 in the 30S initiation complex.

With S4 and S5 plays an important role in translational accuracy. Functionally, interacts with and stabilizes bases of the 16S rRNA that are involved in tRNA selection in the A site and with the mRNA backbone. Located at the interface of the 30S and 50S subunits, it traverses the body of the 30S subunit contacting proteins on the other side and probably holding the rRNA structure together. The combined cluster of proteins S8, S12 and S17 appears to hold together the shoulder and platform of the 30S subunit. The sequence is that of Small ribosomal subunit protein uS12 from Desulfosudis oleivorans (strain DSM 6200 / JCM 39069 / Hxd3) (Desulfococcus oleovorans).